We begin with the raw amino-acid sequence, 343 residues long: uncharacterized protein (343 aa).

Residue 33 to 40 coordinates ATP; the sequence is GPKSSGKS.

It belongs to the archaeal ATPase family.

This is an uncharacterized protein from Methanocaldococcus jannaschii (strain ATCC 43067 / DSM 2661 / JAL-1 / JCM 10045 / NBRC 100440) (Methanococcus jannaschii).